We begin with the raw amino-acid sequence, 172 residues long: Adenine phosphoribosyltransferase (172 aa).

The protein belongs to the purine/pyrimidine phosphoribosyltransferase family. In terms of assembly, homodimer.

It is found in the cytoplasm. It catalyses the reaction AMP + diphosphate = 5-phospho-alpha-D-ribose 1-diphosphate + adenine. The protein operates within purine metabolism; AMP biosynthesis via salvage pathway; AMP from adenine: step 1/1. Functionally, catalyzes a salvage reaction resulting in the formation of AMP, that is energically less costly than de novo synthesis. The sequence is that of Adenine phosphoribosyltransferase from Herpetosiphon aurantiacus (strain ATCC 23779 / DSM 785 / 114-95).